The chain runs to 248 residues: Clathrin light chain A (248 aa).

Positions 1 to 92 (MAELDPFGAP…YYQESNGPTD (92 aa)) are disordered. The span at 13–25 (APGGPALGNGVAG) shows a compositional bias: gly residues. Positions 61 to 71 (GPQPHGEPPGG) are enriched in pro residues. The segment at 100–162 (VDRLQSEPES…QLQKTKANNR (63 aa)) is involved in binding clathrin heavy chain. 2 positions are modified to phosphoserine: Ser105 and Ser206. Residue Lys223 is modified to N6-acetyllysine. Ser236 carries the post-translational modification Phosphoserine. N6-acetyllysine is present on Lys242.

Belongs to the clathrin light chain family. As to quaternary structure, clathrin coats are formed from molecules containing 3 heavy chains and 3 light chains. Interacts with CALY; the interaction stimulates clathrin self-assembly and clathrin-mediated endocytosis. Interacts with CKAP5 and TACC3 forming the TACC3/ch-TOG/clathrin complex located at spindle inter-microtubules bridges; the complex implicates clathrin triskelions.

The protein resides in the cytoplasmic vesicle membrane. It localises to the membrane. It is found in the coated pit. The protein localises to the cytoplasm. Its subcellular location is the cytoskeleton. The protein resides in the spindle. Its function is as follows. Clathrin is the major protein of the polyhedral coat of coated pits and vesicles. Acts as a component of the TACC3/ch-TOG/clathrin complex proposed to contribute to stabilization of kinetochore fibers of the mitotic spindle by acting as inter-microtubule bridge. The polypeptide is Clathrin light chain A (CLTA) (Homo sapiens (Human)).